A 1023-amino-acid polypeptide reads, in one-letter code: MGKGVGRDKYEPAAVSEHGDKKGKKAKKERDMDELKKEVSMDDHKLSLDELHRKYGTDLSRGLTPARAAEILARDGPNALTPPPTTPEWVKFCRQLFGGFSMLLWIGAILCFLAYGIRSATEEEPPNDDLYLGVVLSAVVIITGCFSYYQEAKSSKIMESFKNMVPQQALVIRNGEKMSINAEDVVVGDLVEVKGGDRIPADLRIISANGCKVDNSSLTGESEPQTRSPDFTNENPLETRNIAFFSTNCVEGTARGIVVYTGDRTVMGRIATLASGLEGGQTPIAEEIEHFIHLITGVAVFLGVSFFILSLILEYTWLEAVIFLIGIIVANVPEGLLATVTVCLTLTAKRMARKNCLVKNLEAVETLGSTSTICSDKTGTLTQNRMTVAHMWFDNQIHEADTTENQSGVSFDKTSATWFALSRIAGLCNRAVFQANQENLPILKRAVAGDASESALLKCIEVCCGSVMEMREKYSKIVEIPFNSTNKYQLSIHKNPNASEPKHLLVMKGAPERILDRCSSILLHGKEQPLDEELKDAFQNAYLELGGLGERVLGFCHLLLPDEQFPEGFQFDTDDVNFPVDNLCFVGLISMIDPPRAAVPDAVGKCRSAGIKVIMVTGDHPITAKAIAKGVGIISEGNETVEDIAARLNIPVNQVNPRDAKACVVHGSDLKDMTSEELDDILRYHTEIVFARTSPQQKLIIVEGCQRQGAIVAVTGDGVNDSPALKKADIGVAMGIVGSDVSKQAADMILLDDNFASIVTGVEEGRLIFDNLKKSIAYTLTSNIPEITPFLIFIIANIPLPLGTVTILCIDLGTDMVPAISLAYEQAESDIMKRQPRNPKTDKLVNERLISMAYGQIGMIQALGGFFTYFVILAENGFLPFHLLGIRETWDDRWVNDVEDSYGQQWTYEQRKIVEFTCHTAFFVSIVVVQWADLVICKTRRNSVFQQGMKNKILIFGLFEETALAAFLSYCPGMGAALRMYPLKPTWWFCAFPYSLLIFVYDEVRKLIIRRRPGGWVEKETYY.

Positions 1 to 5 (MGKGV) are excised as a propeptide. The segment covering 1 to 11 (MGKGVGRDKYE) has biased composition (basic and acidic residues). The disordered stretch occupies residues 1 to 39 (MGKGVGRDKYEPAAVSEHGDKKGKKAKKERDMDELKKEV). At 6–96 (GRDKYEPAAV…PEWVKFCRQL (91 aa)) the chain is on the cytoplasmic side. An N6-acetyllysine modification is found at K9. Y10 is subject to Phosphotyrosine. Phosphoserine is present on S16. K21 carries the post-translational modification N6-acetyllysine. Basic and acidic residues predominate over residues 28–39 (KERDMDELKKEV). A phosphoserine mark is found at S40 and S47. The tract at residues 82–84 (PPP) is phosphoinositide-3 kinase binding. A helical transmembrane segment spans residues 97–117 (FGGFSMLLWIGAILCFLAYGI). Topologically, residues 118 to 129 (RSATEEEPPNDD) are extracellular. A helical transmembrane segment spans residues 130 to 150 (LYLGVVLSAVVIITGCFSYYQ). At 151 to 291 (EAKSSKIMES…TPIAEEIEHF (141 aa)) the chain is on the cytoplasmic side. Residues 216 to 235 (SSLTGESEPQTRSPDFTNEN) form a disordered region. S228 carries the post-translational modification Phosphoserine. Residue Y260 is modified to Phosphotyrosine. The helical transmembrane segment at 292-312 (IHLITGVAVFLGVSFFILSLI) threads the bilayer. The Extracellular segment spans residues 313–319 (LEYTWLE). Residues 320–340 (AVIFLIGIIVANVPEGLLATV) traverse the membrane as a helical segment. Residues 341–775 (TVCLTLTAKR…RLIFDNLKKS (435 aa)) are Cytoplasmic-facing. Residue D376 is the 4-aspartylphosphate intermediate of the active site. S452 and S484 each carry phosphoserine. K487 serves as a coordination point for ATP. Position 542 is a phosphotyrosine (Y542). The mediates interaction with SCN7A stretch occupies residues 596 to 717 (RAAVPDAVGK…QGAIVAVTGD (122 aa)). K661 bears the N6-succinyllysine mark. A phosphoserine mark is found at S668 and S675. Mg(2+) is bound by residues D717 and D721. Residues 776-798 (IAYTLTSNIPEITPFLIFIIANI) form a helical membrane-spanning segment. Residues 799–801 (PLP) are Extracellular-facing. The helical transmembrane segment at 802–824 (LGTVTILCIDLGTDMVPAISLAY) threads the bilayer. Residues 825 to 849 (EQAESDIMKRQPRNPKTDKLVNERL) are Cytoplasmic-facing. Residues 850–872 (ISMAYGQIGMIQALGGFFTYFVI) form a helical membrane-spanning segment. Residues 873–915 (LAENGFLPFHLLGIRETWDDRWVNDVEDSYGQQWTYEQRKIVE) lie on the Extracellular side of the membrane. The chain crosses the membrane as a helical span at residues 916–936 (FTCHTAFFVSIVVVQWADLVI). Residues 937 to 952 (CKTRRNSVFQQGMKNK) are Cytoplasmic-facing. At S943 the chain carries Phosphoserine; by PKA. A helical membrane pass occupies residues 953–973 (ILIFGLFEETALAAFLSYCPG). The Extracellular segment spans residues 974–979 (MGAALR). The chain crosses the membrane as a helical span at residues 980–1000 (MYPLKPTWWFCAFPYSLLIFV). Topologically, residues 1001–1023 (YDEVRKLIIRRRPGGWVEKETYY) are cytoplasmic.

The protein belongs to the cation transport ATPase (P-type) (TC 3.A.3) family. Type IIC subfamily. The sodium/potassium-transporting ATPase is composed of a catalytic alpha subunit, an auxiliary non-catalytic beta subunit and an additional regulatory subunit. Interacts with regulatory subunit FXYD1. Interacts with regulatory subunit FXYD3. Interacts with SIK1. Interacts with SLC35G1 and STIM1. Interacts with CLN3; this interaction regulates the sodium/potassium-transporting ATPase complex localization at the plasma membrane. Interacts with SCN7A; activates ATP1A1 P-type sodium:potassium-exchanging transporter activity which indirectly signals to nearby neurons to regulate sodium homeostasis. Phosphorylation on Tyr-10 modulates pumping activity. Phosphorylation of Ser-943 by PKA modulates the response of ATP1A1 to PKC. Dephosphorylation by protein phosphatase 2A (PP2A) following increases in intracellular sodium, leading to increase catalytic activity.

The protein localises to the cell membrane. The protein resides in the basolateral cell membrane. It is found in the sarcolemma. Its subcellular location is the cell projection. It localises to the axon. The protein localises to the melanosome. The catalysed reaction is K(+)(out) + Na(+)(in) + ATP + H2O = K(+)(in) + Na(+)(out) + ADP + phosphate + H(+). This is the catalytic component of the active enzyme, which catalyzes the hydrolysis of ATP coupled with the exchange of sodium and potassium ions across the plasma membrane. This action creates the electrochemical gradient of sodium and potassium ions, providing the energy for active transport of various nutrients. Could also be part of an osmosensory signaling pathway that senses body-fluid sodium levels and controls salt intake behavior as well as voluntary water intake to regulate sodium homeostasis. The sequence is that of Sodium/potassium-transporting ATPase subunit alpha-1 (Atp1a1) from Mus musculus (Mouse).